Here is a 215-residue protein sequence, read N- to C-terminus: Intraflagellar transport protein 43 homolog B (215 aa).

The tract at residues 1–107 is disordered; that stretch reads MDDHLKLGDS…SDGEGDIPVI (107 aa).

It belongs to the IFT43 family. In terms of assembly, component of IFT complex A.

Component of IFT complex A (IFT-A) involved in retrograde ciliary transport along microtubules from the ciliary tip to the base. The sequence is that of Intraflagellar transport protein 43 homolog B (ift43b) from Salmo salar (Atlantic salmon).